The following is a 322-amino-acid chain: Zinc finger C2HC domain-containing protein zchc-1A (322 aa).

2 C2HC/C3H-type zinc fingers span residues 9-38 and 119-148; these read PTFPCPICDRRFIKSSLEKHESACRKLASL and DYVQCEYCSRNFNAAAAERHIPFCREQATR. Zn(2+) contacts are provided by Cys-13, Cys-16, His-28, Cys-32, Cys-123, Cys-126, His-138, and Cys-142. Polar residues predominate over residues 150–159; it reads QGGNLKSSGG. Positions 150-322 are disordered; the sequence is QGGNLKSSGG…SRNNSRSRIF (173 aa). Residues 174 to 220 are compositionally biased toward basic and acidic residues; that stretch reads NEGKKQESSSRNGSAERKPTTRGRDGSLLRARRDDSNDITSRRKSLD. Composition is skewed to polar residues over residues 221–238 and 264–274; these read TRTSLTTGQASNRHTSLS and LQQSSTPQQRL. Residues 276-295 show a composition bias toward low complexity; sequence TPASTTTTASRSGSRTSSRA. A compositionally biased stretch (basic and acidic residues) spans 296–305; sequence CPRDDSRDSR. Over residues 311–322 the composition is skewed to low complexity; that stretch reads NNSRNNSRSRIF.

Belongs to the ZC2HC1 family. Requires Zn(2+) as cofactor.

The chain is Zinc finger C2HC domain-containing protein zchc-1A from Caenorhabditis elegans.